Reading from the N-terminus, the 260-residue chain is DNA repair protein RecO (260 aa).

The protein belongs to the RecO family.

Involved in DNA repair and RecF pathway recombination. This chain is DNA repair protein RecO, found in Streptococcus gordonii (strain Challis / ATCC 35105 / BCRC 15272 / CH1 / DL1 / V288).